Consider the following 589-residue polypeptide: F-box only protein 24 (589 aa).

In terms of domain architecture, F-box spans 23 to 69 (PISVQLFPPELVEHIVSFLPVKDLVALGQTCHYFHEVCDAEGVWRRI). The stretch at 386–435 (GRIFMQGNNRYGQLGTGDKMDRGEPTQVHYLQRPIALWCGLNHSLVLSQT) is one RCC1 repeat. A disordered region spans residues 506–526 (VGGSPEPSQGAGAPQDPGGTA).

As to quaternary structure, directly interacts with SKP1 and CUL1.

Functionally, substrate-recognition component of the SCF (SKP1-CUL1-F-box protein)-type E3 ubiquitin ligase complex. This chain is F-box only protein 24 (Fbxo24), found in Mus musculus (Mouse).